We begin with the raw amino-acid sequence, 852 residues long: Vacuolar protein sorting-associated protein 16 homolog (852 aa).

The protein belongs to the VPS16 family. As to quaternary structure, probable core component of at least two putative endosomal tethering complexes, the homotypic fusion and vacuole protein sorting (HOPS) complex and the class C core vacuole/endosome tethering (CORVET) complex. Their common core is composed of the class C Vps proteins vps-11, vps-16 and vps-18, which in HOPS further associates with vps-33.1, vps-39 and vps-41 and in CORVET with vps-8 and vps-33.2.

It localises to the late endosome membrane. Its subcellular location is the lysosome membrane. Its function is as follows. Plays a role in vesicle-mediated protein trafficking to lysosomal compartments including the endocytic membrane transport pathways. Believed to act as a core component of the putative HOPS and CORVET endosomal tethering complexes which are proposed to be involved in the rab-5-to-rab-7 endosome conversion probably implicating sand-1, and via binding SNAREs and SNARE complexes to mediate tethering and docking events during SNARE-mediated membrane fusion. The HOPS complex is proposed to be recruited to rab-7 on the late endosomal membrane and to regulate late endocytic, phagocytic and autophagic traffic towards lysosomes. Within the HOPS complex, contributes to the normal development of gut granules in the adult intestine. The CORVET complex is proposed to function as a rab-5 effector to mediate early endosome fusion probably in specific endosome subpopulations. Required for recruitment of vps-33.1 to the HOPS complex. Required for fusion of endosomes and autophagosomes with lysosomes; the function is dependent on its association with vps-33.1 but not vps-33.2. The protein is Vacuolar protein sorting-associated protein 16 homolog of Caenorhabditis elegans.